A 524-amino-acid chain; its full sequence is MTDIHAQKILILDFGSQYTQLIARRVRELGVYSEIHPYDCGDDFITEFAPQGIILSGGPESVTGTGTPRAPASVFTLGVPVLGICYGMQTMAAQLGGKVEAVEHREFGYAQVRAHGHSQLLNGIEDHTTPEGHGLLDVWMSHGDQVVGLPPGFKLIASTESAPIAGMADEERRFYALQFHPEVTHTRQGKRILERFVRKLCQCEARWTTGNIVEDAITRVRNRIGAERVVLGLSGGVDSSVVAALLQHAIGEQLTCVFVDTGLLRLNEGDQVMATFAEHMGVRVIRVNAEERFLQALQGIADPEDKRKIIGRLFVEIFDEEAAKIEDARWLAQGTIYPDVIESAGSKTGKAHVIKSHHNVGGLPETMKLQLVEPLRELFKDEVRQIGLELGLPYEMVYRHPFPGPGLGVRILGEVRKEYADLLRRADAIFIEELYRHDLYDKVSQAFAVFLPVKSVGVMGDGRRYDYVVALRAVETIDFMTARWAHLPYDFLDLVSRRIINEIPGISRVTYDISGKPPATIEWE.

One can recognise a Glutamine amidotransferase type-1 domain in the interval 8–206 (KILILDFGSQ…VRKLCQCEAR (199 aa)). Residue Cys-85 is the Nucleophile of the active site. Active-site residues include His-180 and Glu-182. Positions 207 to 399 (WTTGNIVEDA…LGLPYEMVYR (193 aa)) constitute a GMPS ATP-PPase domain. Residue 234 to 240 (SGGVDSS) coordinates ATP.

Homodimer.

The enzyme catalyses XMP + L-glutamine + ATP + H2O = GMP + L-glutamate + AMP + diphosphate + 2 H(+). It functions in the pathway purine metabolism; GMP biosynthesis; GMP from XMP (L-Gln route): step 1/1. Its function is as follows. Catalyzes the synthesis of GMP from XMP. This is GMP synthase [glutamine-hydrolyzing] from Methylococcus capsulatus (strain ATCC 33009 / NCIMB 11132 / Bath).